A 431-amino-acid chain; its full sequence is Histidinol dehydrogenase (431 aa).

Positions 130, 192, and 215 each coordinate NAD(+). The substrate site is built by Ser238, Gln260, and His263. Residues Gln260 and His263 each contribute to the Zn(2+) site. Active-site proton acceptor residues include Glu328 and His329. Substrate-binding residues include His329, Asp362, Glu416, and His421. Asp362 lines the Zn(2+) pocket. His421 contributes to the Zn(2+) binding site.

It belongs to the histidinol dehydrogenase family. The cofactor is Zn(2+).

The catalysed reaction is L-histidinol + 2 NAD(+) + H2O = L-histidine + 2 NADH + 3 H(+). The protein operates within amino-acid biosynthesis; L-histidine biosynthesis; L-histidine from 5-phospho-alpha-D-ribose 1-diphosphate: step 9/9. Catalyzes the sequential NAD-dependent oxidations of L-histidinol to L-histidinaldehyde and then to L-histidine. This chain is Histidinol dehydrogenase, found in Thermosynechococcus vestitus (strain NIES-2133 / IAM M-273 / BP-1).